We begin with the raw amino-acid sequence, 528 residues long: ATP synthase F(1) complex catalytic subunit beta, mitochondrial (528 aa).

Residues 1-46 constitute a mitochondrion transit peptide; sequence MLGLVGRVVAASASGALRGLSPSAPLPQAQLLLRAAPAALQPARDY. The O-linked (GlcNAc) serine glycan is linked to Ser-106. N6-acetyllysine; alternate occurs at positions 124 and 161. N6-succinyllysine; alternate occurs at positions 124 and 161. The residue at position 198 (Lys-198) is an N6-acetyllysine. The ADP site is built by Gly-209, Val-210, Gly-211, Lys-212, Thr-213, and Val-214. Gly-209 is an ATP binding site. Residues Gly-209, Val-210, Gly-211, Lys-212, and Thr-213 each contribute to the phosphate site. ATP-binding residues include Gly-211, Lys-212, Thr-213, and Val-214. Residue Thr-213 participates in Mg(2+) binding. A Mg(2+)-binding site is contributed by Glu-238. Arg-239 is a binding site for ATP. Lys-259 and Lys-264 each carry N6-acetyllysine; alternate. N6-succinyllysine; alternate is present on residues Lys-259 and Lys-264. Thr-312 carries the post-translational modification Phosphothreonine. Ser-415 carries the post-translational modification Phosphoserine. An N6-acetyllysine modification is found at Lys-426. Phosphoserine is present on Ser-433. Lys-480 and Lys-485 each carry N6-acetyllysine. Position 522 is an N6-acetyllysine; alternate (Lys-522). N6-succinyllysine; alternate is present on Lys-522.

The protein belongs to the ATPase alpha/beta chains family. As to quaternary structure, homotrimer. Component of the ATP synthase complex composed at least of ATP5F1A/subunit alpha, ATP5F1B/subunit beta, ATP5MC1/subunit c (homooctomer), MT-ATP6/subunit a, MT-ATP8/subunit 8, ATP5ME/subunit e, ATP5MF/subunit f, ATP5MG/subunit g, ATP5MK/subunit k, ATP5MJ/subunit j, ATP5F1C/subunit gamma, ATP5F1D/subunit delta, ATP5F1E/subunit epsilon, ATP5PF/subunit F6, ATP5PB/subunit b, ATP5PD/subunit d, ATP5PO/subunit OSCP. ATP synthase complex consists of a soluble F(1) head domain (subunits alpha(3) and beta(3)) - the catalytic core - and a membrane F(0) domain - the membrane proton channel (subunits c, a, 8, e, f, g, k and j). These two domains are linked by a central stalk (subunits gamma, delta, and epsilon) rotating inside the F1 region and a stationary peripheral stalk (subunits F6, b, d, and OSCP). Interacts with PPIF. Interacts with BCL2L1 isoform BCL-X(L); the interaction mediates the association of BCL2L1 isoform BCL-X(L) with the mitochondrial membrane F(1)F(0) ATP synthase and enhances neurons metabolic efficiency. Interacts with CLN5 and PPT1. Interacts with S100A1; this interaction increases F1-ATPase activity. Interacts with MTLN. Interacts with TTC5/STRAP; the interaction results in decreased mitochondrial ATP production.

Its subcellular location is the mitochondrion inner membrane. It carries out the reaction ATP + H2O + 4 H(+)(in) = ADP + phosphate + 5 H(+)(out). Its function is as follows. Catalytic subunit beta, of the mitochondrial membrane ATP synthase complex (F(1)F(0) ATP synthase or Complex V) that produces ATP from ADP in the presence of a proton gradient across the membrane which is generated by electron transport complexes of the respiratory chain. ATP synthase complex consist of a soluble F(1) head domain - the catalytic core - and a membrane F(1) domain - the membrane proton channel. These two domains are linked by a central stalk rotating inside the F(1) region and a stationary peripheral stalk. During catalysis, ATP synthesis in the catalytic domain of F(1) is coupled via a rotary mechanism of the central stalk subunits to proton translocation. In vivo, can only synthesize ATP although its ATP hydrolase activity can be activated artificially in vitro. With the subunit alpha (ATP5F1A), forms the catalytic core in the F(1) domain. This Bos taurus (Bovine) protein is ATP synthase F(1) complex catalytic subunit beta, mitochondrial.